A 56-amino-acid chain; its full sequence is Large ribosomal subunit protein bL32 (56 aa).

Positions 1 to 39 (MAVQQNKKSRSKRGMRRSHDSLSTAQLSVDATSGELHRR) are disordered. Over residues 7-16 (KKSRSKRGMR) the composition is skewed to basic residues. Positions 21–31 (SLSTAQLSVDA) are enriched in polar residues.

It belongs to the bacterial ribosomal protein bL32 family.

The sequence is that of Large ribosomal subunit protein bL32 from Shewanella piezotolerans (strain WP3 / JCM 13877).